Consider the following 431-residue polypeptide: uncharacterized protein (431 aa).

The next 2 helical transmembrane spans lie at 42 to 62 (LLIGMFGSVSLVNLLTIIGCL) and 74 to 94 (VMIFTWNLVLSQFFSILATML). An N-linked (GlcNAc...) asparagine; by host glycan is attached at Asn-105. Transmembrane regions (helical) follow at residues 111–131 (LVLFVDDVGLYSTALFFLFLI), 153–173 (AGVALYAVAFAWVLSIVAAVP), 202–222 (MWFLLGAPMIAVLANVVELAY), 236–256 (VCTFYVTCLMLFVPYYCFRVL), and 279–299 (ATRTLLTMRLGILPLFIIAFF).

The protein resides in the membrane. This is an uncharacterized protein from Homo sapiens (Human).